The following is a 457-amino-acid chain: Argininosuccinate lyase (457 aa).

The protein belongs to the lyase 1 family. Argininosuccinate lyase subfamily.

It is found in the cytoplasm. It carries out the reaction 2-(N(omega)-L-arginino)succinate = fumarate + L-arginine. It functions in the pathway amino-acid biosynthesis; L-arginine biosynthesis; L-arginine from L-ornithine and carbamoyl phosphate: step 3/3. The protein is Argininosuccinate lyase of Escherichia coli O139:H28 (strain E24377A / ETEC).